We begin with the raw amino-acid sequence, 111 residues long: Nascent polypeptide-associated complex protein (111 aa).

The NAC-A/B domain maps to 3-72 (GMNPRQMKKL…EEVREVLEIS (70 aa)).

It belongs to the NAC-alpha family. As to quaternary structure, homodimer. Interacts with the ribosome. Binds ribosomal RNA.

Contacts the emerging nascent chain on the ribosome. This is Nascent polypeptide-associated complex protein from Thermococcus kodakarensis (strain ATCC BAA-918 / JCM 12380 / KOD1) (Pyrococcus kodakaraensis (strain KOD1)).